The chain runs to 814 residues: Acyl-coenzyme A dehydrogenase (814 aa).

Glutamate 497 acts as the Proton acceptor in catalysis.

Belongs to the acyl-CoA dehydrogenase family. FAD is required as a cofactor.

It catalyses the reaction a medium-chain 2,3-saturated fatty acyl-CoA + oxidized [electron-transfer flavoprotein] + H(+) = a medium-chain (2E)-enoyl-CoA + reduced [electron-transfer flavoprotein]. The enzyme catalyses a long-chain 2,3-saturated fatty acyl-CoA + oxidized [electron-transfer flavoprotein] + H(+) = a long-chain (2E)-enoyl-CoA + reduced [electron-transfer flavoprotein]. The protein operates within lipid metabolism; fatty acid beta-oxidation. Its function is as follows. Catalyzes the dehydrogenation of acyl-coenzymes A (acyl-CoAs) to 2-enoyl-CoAs, the first step of the beta-oxidation cycle of fatty acid degradation. Is required for the utilization of medium- and long-chain fatty acids as sole carbon sources for growth. Is needed for bacterial survival during carbone-source starvation. The protein is Acyl-coenzyme A dehydrogenase (fadE) of Salmonella typhi.